Consider the following 212-residue polypeptide: Ribosomal RNA large subunit methyltransferase E (212 aa).

5 residues coordinate S-adenosyl-L-methionine: G56, W58, D78, D94, and D117. K157 (proton acceptor) is an active-site residue.

It belongs to the class I-like SAM-binding methyltransferase superfamily. RNA methyltransferase RlmE family.

It is found in the cytoplasm. The enzyme catalyses uridine(2552) in 23S rRNA + S-adenosyl-L-methionine = 2'-O-methyluridine(2552) in 23S rRNA + S-adenosyl-L-homocysteine + H(+). Specifically methylates the uridine in position 2552 of 23S rRNA at the 2'-O position of the ribose in the fully assembled 50S ribosomal subunit. The sequence is that of Ribosomal RNA large subunit methyltransferase E from Ehrlichia chaffeensis (strain ATCC CRL-10679 / Arkansas).